Reading from the N-terminus, the 427-residue chain is Trigger factor (427 aa).

Residues 160–240 (TDTVIGDVEK…VKEVKRLELP (81 aa)) form the PPIase FKBP-type domain.

This sequence belongs to the FKBP-type PPIase family. Tig subfamily.

Its subcellular location is the cytoplasm. It carries out the reaction [protein]-peptidylproline (omega=180) = [protein]-peptidylproline (omega=0). Involved in protein export. Acts as a chaperone by maintaining the newly synthesized protein in an open conformation. Functions as a peptidyl-prolyl cis-trans isomerase. This Chlorobium phaeobacteroides (strain DSM 266 / SMG 266 / 2430) protein is Trigger factor.